The chain runs to 562 residues: Formate--tetrahydrofolate ligase (562 aa).

Residue 71 to 78 (TPAGEGKS) coordinates ATP.

The protein belongs to the formate--tetrahydrofolate ligase family.

The catalysed reaction is (6S)-5,6,7,8-tetrahydrofolate + formate + ATP = (6R)-10-formyltetrahydrofolate + ADP + phosphate. It participates in one-carbon metabolism; tetrahydrofolate interconversion. This Bacillus anthracis (strain A0248) protein is Formate--tetrahydrofolate ligase.